Reading from the N-terminus, the 357-residue chain is Heat-inducible transcription repressor HrcA (357 aa).

Belongs to the HrcA family.

Its function is as follows. Negative regulator of class I heat shock genes (grpE-dnaK-dnaJ and groELS operons). Prevents heat-shock induction of these operons. This Anabaena sp. (strain L31) protein is Heat-inducible transcription repressor HrcA.